Here is a 524-residue protein sequence, read N- to C-terminus: Cytochrome P450 1A1 (524 aa).

The segment at 33-44 (LRTQVPKGLKTP) is mitochondrial targeting signal. Serine 71 is a glycosylation site (O-linked (GlcNAc) serine). A substrate-binding site is contributed by phenylalanine 228. Cysteine 461 serves as a coordination point for heme.

Belongs to the cytochrome P450 family. In terms of assembly, interacts with cytosolic chaperones HSP70 and HSP90; this interaction is required for initial targeting to mitochondria. Interacts (via mitochondrial targeting signal) with TOMM40 (via N-terminus); this interaction is required for translocation across the mitochondrial outer membrane. Requires heme as cofactor.

The protein resides in the endoplasmic reticulum membrane. Its subcellular location is the mitochondrion inner membrane. The protein localises to the microsome membrane. It is found in the cytoplasm. It carries out the reaction an organic molecule + reduced [NADPH--hemoprotein reductase] + O2 = an alcohol + oxidized [NADPH--hemoprotein reductase] + H2O + H(+). It catalyses the reaction estrone + reduced [NADPH--hemoprotein reductase] + O2 = 2-hydroxyestrone + oxidized [NADPH--hemoprotein reductase] + H2O + H(+). The enzyme catalyses estrone + reduced [NADPH--hemoprotein reductase] + O2 = 4-hydroxyestrone + oxidized [NADPH--hemoprotein reductase] + H2O + H(+). The catalysed reaction is estrone + reduced [NADPH--hemoprotein reductase] + O2 = 6alpha-hydroxyestrone + oxidized [NADPH--hemoprotein reductase] + H2O + H(+). It carries out the reaction estrone + reduced [NADPH--hemoprotein reductase] + O2 = 15alpha-hydroxyestrone + oxidized [NADPH--hemoprotein reductase] + H2O + H(+). It catalyses the reaction estrone + reduced [NADPH--hemoprotein reductase] + O2 = 16alpha-hydroxyestrone + oxidized [NADPH--hemoprotein reductase] + H2O + H(+). The enzyme catalyses 17beta-estradiol + reduced [NADPH--hemoprotein reductase] + O2 = 2-hydroxy-17beta-estradiol + oxidized [NADPH--hemoprotein reductase] + H2O + H(+). The catalysed reaction is 17beta-estradiol + reduced [NADPH--hemoprotein reductase] + O2 = 4-hydroxy-17beta-estradiol + oxidized [NADPH--hemoprotein reductase] + H2O + H(+). It carries out the reaction 17beta-estradiol + reduced [NADPH--hemoprotein reductase] + O2 = 6alpha-hydroxy-17beta-estradiol + oxidized [NADPH--hemoprotein reductase] + H2O + H(+). It catalyses the reaction 17beta-estradiol + reduced [NADPH--hemoprotein reductase] + O2 = 7alpha-hydroxy-17beta-estradiol + oxidized [NADPH--hemoprotein reductase] + H2O + H(+). The enzyme catalyses 17beta-estradiol + reduced [NADPH--hemoprotein reductase] + O2 = 15alpha-hydroxy-17beta-estradiol + oxidized [NADPH--hemoprotein reductase] + H2O + H(+). The catalysed reaction is (5Z,8Z,11Z)-eicosatrienoate + reduced [NADPH--hemoprotein reductase] + O2 = 19-hydroxy-(5Z,8Z,11Z)-eicosatrienoate + oxidized [NADPH--hemoprotein reductase] + H2O + H(+). It carries out the reaction (5Z,8Z,11Z,14Z)-eicosatetraenoate + reduced [NADPH--hemoprotein reductase] + O2 = 16-hydroxy-(5Z,8Z,11Z,14Z)-eicosatetraenoate + oxidized [NADPH--hemoprotein reductase] + H2O + H(+). It catalyses the reaction (5Z,8Z,11Z,14Z)-eicosatetraenoate + reduced [NADPH--hemoprotein reductase] + O2 = 17-hydroxy-(5Z,8Z,11Z,14Z)-eicosatetraenoate + oxidized [NADPH--hemoprotein reductase] + H2O + H(+). The enzyme catalyses (5Z,8Z,11Z,14Z)-eicosatetraenoate + reduced [NADPH--hemoprotein reductase] + O2 = 18-hydroxy-(5Z,8Z,11Z,14Z)-eicosatetraenoate + oxidized [NADPH--hemoprotein reductase] + H2O + H(+). The catalysed reaction is (5Z,8Z,11Z,14Z)-eicosatetraenoate + reduced [NADPH--hemoprotein reductase] + O2 = 19-hydroxy-(5Z,8Z,11Z,14Z)-eicosatetraenoate + oxidized [NADPH--hemoprotein reductase] + H2O + H(+). It carries out the reaction (5Z,8Z,11Z,14Z,17Z)-eicosapentaenoate + reduced [NADPH--hemoprotein reductase] + O2 = 19-hydroxy-(5Z,8Z,11Z,14Z,17Z)-eicosapentaenoate + oxidized [NADPH--hemoprotein reductase] + H2O + H(+). It catalyses the reaction (5Z,8Z,11Z,14Z)-eicosatetraenoate + reduced [NADPH--hemoprotein reductase] + O2 = (8R,9S)-epoxy-(5Z,11Z,14Z)-eicosatrienoate + oxidized [NADPH--hemoprotein reductase] + H2O + H(+). The enzyme catalyses (5Z,8Z,11Z,14Z)-eicosatetraenoate + reduced [NADPH--hemoprotein reductase] + O2 = (11R,12S)-epoxy-(5Z,8Z,14Z)-eicosatrienoate + oxidized [NADPH--hemoprotein reductase] + H2O + H(+). The catalysed reaction is (5Z,8Z,11Z,14Z)-eicosatetraenoate + reduced [NADPH--hemoprotein reductase] + O2 = (14S,15R)-epoxy-(5Z,8Z,11Z)-eicosatrienoate + oxidized [NADPH--hemoprotein reductase] + H2O + H(+). It carries out the reaction (5Z,8Z,11Z,14Z)-eicosatetraenoate + reduced [NADPH--hemoprotein reductase] + O2 = (14R,15S)-epoxy-(5Z,8Z,11Z)-eicosatrienoate + oxidized [NADPH--hemoprotein reductase] + H2O + H(+). It catalyses the reaction (5Z,8Z,11Z,14Z,17Z)-eicosapentaenoate + reduced [NADPH--hemoprotein reductase] + O2 = (17R,18S)-epoxy-(5Z,8Z,11Z,14Z)-eicosatetraenoate + oxidized [NADPH--hemoprotein reductase] + H2O + H(+). The enzyme catalyses (4Z,7Z,10Z,13Z,16Z,19Z)-docosahexaenoate + reduced [NADPH--hemoprotein reductase] + O2 = (19S,20R)-epoxy-(4Z,7Z,10Z,13Z,16Z)-docosapentaenoate + oxidized [NADPH--hemoprotein reductase] + H2O + H(+). The catalysed reaction is (4Z,7Z,10Z,13Z,16Z,19Z)-docosahexaenoate + reduced [NADPH--hemoprotein reductase] + O2 = (19R,20S)-epoxy-(4Z,7Z,10Z,13Z,16Z)-docosapentaenoate + oxidized [NADPH--hemoprotein reductase] + H2O + H(+). It carries out the reaction all-trans-retinol + reduced [NADPH--hemoprotein reductase] + O2 = all-trans-retinal + oxidized [NADPH--hemoprotein reductase] + 2 H2O + H(+). It catalyses the reaction all-trans-retinal + reduced [NADPH--hemoprotein reductase] + O2 = all-trans-retinoate + oxidized [NADPH--hemoprotein reductase] + H2O + 2 H(+). The enzyme catalyses (13S)-hydroperoxy-(9Z,11E)-octadecadienoate = 13-oxo-(9Z,11E)-octadecadienoate + H2O. The catalysed reaction is (12S)-hydroperoxy-(5Z,8Z,10E,14Z)-eicosatetraenoate = 12-oxo-(5Z,8Z,10E,14Z)-eicosatetraenoate + H2O. It carries out the reaction (15S)-hydroperoxy-(5Z,8Z,11Z,13E)-eicosatetraenoate = 15-oxo-(5Z,8Z,11Z,13E)-eicosatetraenoate + H2O. It catalyses the reaction (5S)-hydroperoxy-(6E,8Z,11Z,14Z)-eicosatetraenoate = 5-oxo-(6E,8Z,11Z,14Z)-eicosatetraenoate + H2O. It functions in the pathway steroid hormone biosynthesis. It participates in lipid metabolism; fatty acid metabolism. The protein operates within cofactor metabolism; retinol metabolism. Its function is as follows. A cytochrome P450 monooxygenase involved in the metabolism of various endogenous substrates, including fatty acids, steroid hormones and vitamins. Mechanistically, uses molecular oxygen inserting one oxygen atom into a substrate, and reducing the second into a water molecule, with two electrons provided by NADPH via cytochrome P450 reductase (CPR; NADPH-ferrihemoprotein reductase). Catalyzes the hydroxylation of carbon-hydrogen bonds. Exhibits high catalytic activity for the formation of hydroxyestrogens from estrone (E1) and 17beta-estradiol (E2), namely 2-hydroxy E1 and E2, as well as D-ring hydroxylated E1 and E2 at the C15alpha and C16alpha positions. Displays different regioselectivities for polyunsaturated fatty acids (PUFA) hydroxylation. Catalyzes the epoxidation of double bonds of certain PUFA. Converts arachidonic acid toward epoxyeicosatrienoic acid (EET) regioisomers, 8,9-, 11,12-, and 14,15-EET, that function as lipid mediators in the vascular system. Displays an absolute stereoselectivity in the epoxidation of eicosapentaenoic acid (EPA) producing the 17(R),18(S) enantiomer. May play an important role in all-trans retinoic acid biosynthesis in extrahepatic tissues. Catalyzes two successive oxidative transformation of all-trans retinol to all-trans retinal and then to the active form all-trans retinoic acid. May also participate in eicosanoids metabolism by converting hydroperoxide species into oxo metabolites (lipoxygenase-like reaction, NADPH-independent). This chain is Cytochrome P450 1A1 (CYP1A1), found in Mesocricetus auratus (Golden hamster).